A 1132-amino-acid chain; its full sequence is Sentrin-specific protease 6 (1132 aa).

Disordered regions lie at residues serine 23–asparagine 51 and leucine 327–threonine 388. A phosphoserine mark is found at serine 41, serine 355, serine 356, serine 371, and serine 373. Threonine 436 carries the phosphothreonine modification. A Glycyl lysine isopeptide (Lys-Gly) (interchain with G-Cter in SUMO2) cross-link involves residue lysine 648. A protease region spans residues isoleucine 686–glutamate 1132. Active-site residues include histidine 785 and aspartate 936. The residue at position 938 (serine 938) is a Phosphoserine. The active site involves cysteine 1049. A Phosphoserine modification is found at serine 1131.

Belongs to the peptidase C48 family. As to quaternary structure, interacts with RXRA. Forms a complex with KAT5-TIP60 and UBE2I in response to UV irradiation. Interacts with RPA1 to maintain it in hyposumoylated state during S phase preventing DNA repair initiation.

It is found in the nucleus. It participates in protein modification; protein sumoylation. Protease that deconjugates SUMO1, SUMO2 and SUMO3 from targeted proteins. Processes preferentially poly-SUMO2 and poly-SUMO3 chains, but does not efficiently process SUMO1, SUMO2 and SUMO3 precursors. Deconjugates SUMO1 from RXRA, leading to transcriptional activation. Involved in chromosome alignment and spindle assembly, by regulating the kinetochore CENPH-CENPI-CENPK complex. Desumoylates PML and CENPI, protecting them from degradation by the ubiquitin ligase RNF4, which targets polysumoylated proteins for proteasomal degradation. Also desumoylates RPA1, thus preventing recruitment of RAD51 to the DNA damage foci to initiate DNA repair through homologous recombination. The chain is Sentrin-specific protease 6 (Senp6) from Mus musculus (Mouse).